The primary structure comprises 155 residues: MPEAGAIRPDGTVLGFDVGSRRIGVAVGSALGAGARAVAVINVHANGPDWVALDRVHKQWRPDGLVVGDPLTLDDKDQPARKRAHAFARQLRERYALPVVLIDERSSSVEAAQRFARERADGRKRRRDAEALDAMAAAVIVERWLAAPDQATLLP.

This sequence belongs to the YqgF nuclease family.

It localises to the cytoplasm. Its function is as follows. Could be a nuclease involved in processing of the 5'-end of pre-16S rRNA. The sequence is that of Putative pre-16S rRNA nuclease from Xanthomonas axonopodis pv. citri (strain 306).